The sequence spans 227 residues: uncharacterized protein (227 aa).

The signal sequence occupies residues 1–21 (MELKKIAVGLTALLGMSVANA).

This is an uncharacterized protein from Haemophilus influenzae (strain ATCC 51907 / DSM 11121 / KW20 / Rd).